The following is a 249-amino-acid chain: Triosephosphate isomerase (249 aa).

9 to 11 (NWK) provides a ligand contact to substrate. H94 (electrophile) is an active-site residue. E166 functions as the Proton acceptor in the catalytic mechanism. Substrate is bound by residues G172, S211, and 232-233 (GG).

It belongs to the triosephosphate isomerase family. Homodimer.

Its subcellular location is the cytoplasm. The enzyme catalyses D-glyceraldehyde 3-phosphate = dihydroxyacetone phosphate. It functions in the pathway carbohydrate biosynthesis; gluconeogenesis. The protein operates within carbohydrate degradation; glycolysis; D-glyceraldehyde 3-phosphate from glycerone phosphate: step 1/1. In terms of biological role, involved in the gluconeogenesis. Catalyzes stereospecifically the conversion of dihydroxyacetone phosphate (DHAP) to D-glyceraldehyde-3-phosphate (G3P). The protein is Triosephosphate isomerase of Moorella thermoacetica (strain ATCC 39073 / JCM 9320).